The primary structure comprises 311 residues: Long form salivary protein D7L1 (311 aa).

The signal sequence occupies residues 1–16 (MKALIFLGAIIAGVLS). Intrachain disulfides connect cysteine 34/cysteine 67 and cysteine 63/cysteine 120. The ADP site is built by serine 146, arginine 149, tyrosine 153, and lysine 160. Cystine bridges form between cysteine 170–cysteine 202, cysteine 183–cysteine 311, and cysteine 244–cysteine 258. ADP contacts are provided by asparagine 281, tyrosine 282, and serine 283.

This sequence belongs to the PBP/GOBP family. In terms of tissue distribution, distal lateral and medial lobes of female mosquito salivary gland (at protein level). Expressed in the head and thorax of the female mosquitoes, where the salivary glands are located. Expressed in salivary gland. Not detected in the female mosquito abdomen. Not detected in the male mosquito tissues.

The protein localises to the secreted. Functionally, modulates blood feeding of female mosquitoes on vertebrate species by binding and sequestering different mediators involved in the host response. Binds adenine, adenosine, AMP, ADP and ATP, with the highest affinity to ATP and ADP. Inhibits agonist-induced platelet aggregation and hemostasis. The sequence is that of Long form salivary protein D7L1 from Culex quinquefasciatus (Southern house mosquito).